The sequence spans 426 residues: Histidine--tRNA ligase (426 aa).

It belongs to the class-II aminoacyl-tRNA synthetase family. As to quaternary structure, homodimer.

The protein localises to the cytoplasm. It carries out the reaction tRNA(His) + L-histidine + ATP = L-histidyl-tRNA(His) + AMP + diphosphate + H(+). The chain is Histidine--tRNA ligase from Streptococcus equi subsp. zooepidemicus (strain MGCS10565).